Here is a 259-residue protein sequence, read N- to C-terminus: DNA repair protein RecO (259 aa).

It belongs to the RecO family.

In terms of biological role, involved in DNA repair and RecF pathway recombination. The polypeptide is DNA repair protein RecO (Syntrophus aciditrophicus (strain SB)).